The primary structure comprises 150 residues: UPF0756 membrane protein YE1142 (150 aa).

The next 4 membrane-spanning stretches (helical) occupy residues 1 to 21 (MAALDPTLLILLVLAGLGIIS), 51 to 71 (YGLTIGILILTIGVMTPIASG), 88 to 108 (ILAIVVGVAVSWLGGRGVSLM), and 114 to 134 (VVAGLLVGTVLGVALFRGVPV).

This sequence belongs to the UPF0756 family.

It localises to the cell membrane. This Yersinia enterocolitica serotype O:8 / biotype 1B (strain NCTC 13174 / 8081) protein is UPF0756 membrane protein YE1142.